We begin with the raw amino-acid sequence, 114 residues long: rRNA-processing protein cgrA (114 aa).

The segment covering 1–11 has biased composition (polar residues); it reads MSSAIPTSSVN. The interval 1–114 is disordered; that stretch reads MSSAIPTSSV…REKRNKLLHS (114 aa). A compositionally biased stretch (basic and acidic residues) spans 39–93; the sequence is YEKRLEARKRQEAVKEHERELREEKEAERKAQIQKIKDRRAAKEEKERYEKMAEK. The stretch at 40–101 forms a coiled coil; it reads EKRLEARKRQ…EKMHRKRVER (62 aa). Positions 94-114 are enriched in basic residues; that stretch reads MHRKRVERLKRREKRNKLLHS.

This sequence belongs to the CGR1 family.

Its subcellular location is the nucleus. The protein resides in the nucleolus. Its function is as follows. Involved in nucleolar integrity and required for processing of the pre-rRNA for the 60S ribosome subunit. This is rRNA-processing protein cgrA (cgrA) from Aspergillus fumigatus (strain ATCC MYA-4609 / CBS 101355 / FGSC A1100 / Af293) (Neosartorya fumigata).